We begin with the raw amino-acid sequence, 849 residues long: Autoinducer 1 sensor kinase/phosphatase LuxN (849 aa).

7 consecutive transmembrane segments (helical) span residues 9 to 29 (IVYAKAITLLATVAVVMMWLF), 41 to 61 (VIFGTHHAAYIAYSVCIIAWI), 160 to 180 (SYFFIGLVSFVVLTLVNLVAM), 196 to 216 (IAGILVFMLSTAVIHLGMTYF), 220 to 242 (FSLTWLPPALSISEMLFVGYALL), 251 to 275 (YIAYLALSVLLVCAIFVLPLGAIFI), and 283 to 301 (WLIAIPICALIGITWQLLY). In terms of domain architecture, Histidine kinase spans 468-683 (SIAHEMRNPL…EFHLYFPVVP (216 aa)). His-471 is modified (phosphohistidine; by autocatalysis). The 114-residue stretch at 722 to 835 (TVLIVDDKEV…ALRHVLGNWL (114 aa)) folds into the Response regulatory domain. Asp-771 carries the post-translational modification 4-aspartylphosphate.

The protein resides in the cell inner membrane. The catalysed reaction is ATP + protein L-histidine = ADP + protein N-phospho-L-histidine.. The phosphatase activity is constitutive and the kinase activity is regulated by the presence or absence of AI-1. At low cell density the kinase activity overrides the phosphatase activity. Functionally, at low cell density, in the absence of AI-1 (autoinducer 1), LuxN has a kinase activity and autophosphorylates on His-471. The phosphoryl group is then transferred on Asp-771 of the response regulator domain. The phosphoryl group is transferred to LuxU, and ultimately to LuxO. At high cell density, in the presence of AI-1, the kinase activity is inactivated, and the response regulator domain has a phosphatase activity. LuxN phosphatase acts on itself. As LuxU could function to establish an equilibrium between the aspartyl-phosphate of LuxN and the aspartyl-phosphate of LuxO, LuxU transfers phosphate from LuxO to LuxN and finally phosphate is drained from the system. This Vibrio campbellii (strain ATCC BAA-1116) protein is Autoinducer 1 sensor kinase/phosphatase LuxN (luxN).